A 416-amino-acid chain; its full sequence is Probable glucan 1,3-beta-glucosidase A (416 aa).

The N-terminal stretch at 1–21 (MLYNLSKAVLALSVLAASADA) is a signal peptide. Residue Glu-209 is the Proton donor of the active site. Intrachain disulfides connect Cys-290/Cys-415 and Cys-316/Cys-341. Residue Glu-308 is the Nucleophile of the active site.

Belongs to the glycosyl hydrolase 5 (cellulase A) family. In terms of assembly, monomer. Requires Mn(2+) as cofactor.

The protein resides in the secreted. It catalyses the reaction Successive hydrolysis of beta-D-glucose units from the non-reducing ends of (1-&gt;3)-beta-D-glucans, releasing alpha-glucose.. In terms of biological role, beta-glucanases participate in the metabolism of beta-glucan, the main structural component of the cell wall. It could also function biosynthetically as a transglycosylase. In Aspergillus terreus (strain NIH 2624 / FGSC A1156), this protein is Probable glucan 1,3-beta-glucosidase A (exgA).